Reading from the N-terminus, the 254-residue chain is Chaperone protein PmfD (254 aa).

A signal peptide spans methionine 1 to alanine 26.

This sequence belongs to the periplasmic pilus chaperone family.

The protein localises to the periplasm. Involved in the biogenesis of the PMF fimbria. This chain is Chaperone protein PmfD (pmfD), found in Proteus mirabilis (strain HI4320).